Here is a 78-residue protein sequence, read N- to C-terminus: Gas vesicle protein A (78 aa).

Residues 9–19 (LAEVLDRVLDK) are alpha helix 1. A beta-strand 1 region spans residues 23 to 31 (VDVWARISL). A beta turn region spans residues 32–34 (VGI). Positions 35-43 (EILTVEARV) are beta-strand 2. The tract at residues 48–67 (VDTFLHYAEEIAKIEQAELT) is alpha helix 2.

Belongs to the gas vesicle GvpA family. As to quaternary structure, the gas vesicle shell is 2 nm thick and consists of a single layer of this protein. It forms helical ribs nearly perpendicular to the long axis of the vesicle. Modeled as antiparallel homodimers.

The protein localises to the gas vesicle shell. Functionally, gas vesicles are hollow, gas filled proteinaceous nanostructures found in some microorganisms. During planktonic growth they allow positioning of the organism at a favorable depth for light or nutrient acquisition. GvpA forms the protein shell. This gene replaces p-gvpA of H.salinarum very poorly, only about 1% of GVs are formed; the few gas vesicles formed are quite strong with a very high critical collapse pressure (CCP) of 0.213 MPa. Its function is as follows. Expression of a 9.5 kb mc-vac DNA fragment containing 2 divergently transcribed regions (gvpD-gvpE-gvpF-gvpG-gvpH-gvpI-gvpJ-gvpK-gvpL-gvpM and gvpA-gvpC-gvpN-gvpO) allows H.volcanii to produce gas vesicles. In Haloferax mediterranei (strain ATCC 33500 / DSM 1411 / JCM 8866 / NBRC 14739 / NCIMB 2177 / R-4) (Halobacterium mediterranei), this protein is Gas vesicle protein A.